A 697-amino-acid chain; its full sequence is Long-chain-fatty-acid--CoA ligase 6 (697 aa).

A helical; Signal-anchor for type III membrane protein transmembrane segment spans residues 25 to 45; the sequence is LSATTLVSMGALAAILAYWLT. The Cytoplasmic portion of the chain corresponds to 46–697; it reads HRPKALQPPC…QIEELYSISM (652 aa).

Belongs to the ATP-dependent AMP-binding enzyme family. Mg(2+) is required as a cofactor. In terms of tissue distribution, expressed predominantly in brain and, to a much lesser extent, in heart and adrenal.

Its subcellular location is the mitochondrion outer membrane. It is found in the peroxisome membrane. It localises to the microsome membrane. The protein resides in the endoplasmic reticulum membrane. It carries out the reaction a long-chain fatty acid + ATP + CoA = a long-chain fatty acyl-CoA + AMP + diphosphate. It catalyses the reaction (5Z,8Z,11Z,14Z)-eicosatetraenoate + ATP + CoA = (5Z,8Z,11Z,14Z)-eicosatetraenoyl-CoA + AMP + diphosphate. The enzyme catalyses 15-hydroxy-(5Z,8Z,11Z,13E)-eicosatetraenoate + ATP + CoA = 15-hydroxy-(5Z,8Z,11Z,13E)-eicosatetraenoyl-CoA + AMP + diphosphate. The catalysed reaction is 12-hydroxy-(5Z,8Z,10E,14Z)-eicosatetraenoate + ATP + CoA = 12-hydroxy-(5Z,8Z,10E,14Z)-eicosatetraenoyl-CoA + AMP + diphosphate. It carries out the reaction 5-hydroxy-(6E,8Z,11Z,14Z)-eicosatetraenoate + ATP + CoA = 5-hydroxy-(6E,8Z,11Z,14Z)-eicosatetraenoyl-CoA + AMP + diphosphate. It catalyses the reaction hexadecanoate + ATP + CoA = hexadecanoyl-CoA + AMP + diphosphate. The enzyme catalyses (E)-hexadec-2-enoate + ATP + CoA = (2E)-hexadecenoyl-CoA + AMP + diphosphate. In terms of biological role, catalyzes the conversion of long-chain fatty acids to their active form acyl-CoA for both synthesis of cellular lipids, and degradation via beta-oxidation. Plays an important role in fatty acid metabolism in brain and the acyl-CoAs produced may be utilized exclusively for the synthesis of the brain lipid. The protein is Long-chain-fatty-acid--CoA ligase 6 of Rattus norvegicus (Rat).